A 312-amino-acid polypeptide reads, in one-letter code: Flavonol 3-sulfotransferase (312 aa).

Position 59–64 (59–64 (KSGTTW)) interacts with 3'-phosphoadenylyl sulfate. Catalysis depends on H119, which acts as the Proton acceptor. 3'-phosphoadenylyl sulfate-binding positions include R141, S149, Y207, and 277–279 (RKG).

The protein belongs to the sulfotransferase 1 family. Highest in shoot tips and lowest in mature leaves and roots.

The protein localises to the cytoplasm. Its function is as follows. Sulfotransferase that utilizes 3'-phospho-5'-adenylyl sulfate (PAPS) as sulfonate donor to catalyze the sulfate conjugation of quercetin, rhamnetin and isorhamnetin but not kaempferol. O-sulfation of position 3 of flavonol. May play a role in auxin transport. In Flaveria bidentis (Coastal plain yellowtops), this protein is Flavonol 3-sulfotransferase.